The chain runs to 546 residues: Glucose-6-phosphate isomerase (546 aa).

Catalysis depends on Glu-357, which acts as the Proton donor. Catalysis depends on residues His-389 and Lys-509.

It belongs to the GPI family.

It localises to the cytoplasm. It catalyses the reaction alpha-D-glucose 6-phosphate = beta-D-fructose 6-phosphate. The protein operates within carbohydrate biosynthesis; gluconeogenesis. Its pathway is carbohydrate degradation; glycolysis; D-glyceraldehyde 3-phosphate and glycerone phosphate from D-glucose: step 2/4. In terms of biological role, catalyzes the reversible isomerization of glucose-6-phosphate to fructose-6-phosphate. This chain is Glucose-6-phosphate isomerase, found in Anaeromyxobacter sp. (strain K).